The chain runs to 379 residues: Cytochrome b (379 aa).

The next 4 helical transmembrane spans lie at 33–53 (FGSL…FLAM), 77–98 (WMIR…FIHV), 113–133 (WNVG…GYVL), and 178–198 (FFAL…IHLL). The heme b site is built by His83 and His97. 2 residues coordinate heme b: His182 and His196. Position 201 (His201) interacts with a ubiquinone. The next 4 membrane-spanning stretches (helical) occupy residues 226–246 (TKDF…ALFY), 288–308 (LGGV…PFLQ), 320–340 (LSQF…WIGG), and 347–367 (FISI…FIMP).

It belongs to the cytochrome b family. In terms of assembly, the cytochrome bc1 complex contains 11 subunits: 3 respiratory subunits (MT-CYB, CYC1 and UQCRFS1), 2 core proteins (UQCRC1 and UQCRC2) and 6 low-molecular weight proteins (UQCRH/QCR6, UQCRB/QCR7, UQCRQ/QCR8, UQCR10/QCR9, UQCR11/QCR10 and a cleavage product of UQCRFS1). This cytochrome bc1 complex then forms a dimer. Requires heme b as cofactor.

It localises to the mitochondrion inner membrane. Its function is as follows. Component of the ubiquinol-cytochrome c reductase complex (complex III or cytochrome b-c1 complex) that is part of the mitochondrial respiratory chain. The b-c1 complex mediates electron transfer from ubiquinol to cytochrome c. Contributes to the generation of a proton gradient across the mitochondrial membrane that is then used for ATP synthesis. The protein is Cytochrome b (MT-CYB) of Lepilemur septentrionalis (Northern sportive lemur).